Here is a 432-residue protein sequence, read N- to C-terminus: Adenosylhomocysteinase (432 aa).

S2 carries the post-translational modification N-acetylserine. The substrate site is built by T57, D131, and E156. 157–159 (TTT) is an NAD(+) binding site. S183 is subject to Phosphoserine. Substrate contacts are provided by K186 and D190. N6-(2-hydroxyisobutyryl)lysine is present on K186. Y193 bears the Phosphotyrosine mark. Residues 222–227 (GDVGKG), E243, N248, 299–301 (IGH), N346, and H353 contribute to the NAD(+) site.

The protein belongs to the adenosylhomocysteinase family. In terms of assembly, homotetramer. Interaction with AHCYL1. Requires NAD(+) as cofactor.

Its subcellular location is the cytoplasm. The protein resides in the melanosome. It is found in the nucleus. It localises to the endoplasmic reticulum. The enzyme catalyses S-adenosyl-L-homocysteine + H2O = L-homocysteine + adenosine. Its pathway is amino-acid biosynthesis; L-homocysteine biosynthesis; L-homocysteine from S-adenosyl-L-homocysteine: step 1/1. In terms of biological role, catalyzes the hydrolysis of S-adenosyl-L-homocysteine to form adenosine and homocysteine. Binds copper ions. This is Adenosylhomocysteinase (AHCY) from Homo sapiens (Human).